Reading from the N-terminus, the 230-residue chain is 3,4-dihydroxy-2-butanone 4-phosphate synthase (230 aa).

D-ribulose 5-phosphate contacts are provided by residues 42 to 43 (RE), Asp47, 155 to 159 (RRGHT), and Glu179. Residue Glu43 coordinates Mg(2+). His158 lines the Mg(2+) pocket.

This sequence belongs to the DHBP synthase family. Homodimer. It depends on Mg(2+) as a cofactor. Requires Mn(2+) as cofactor.

The catalysed reaction is D-ribulose 5-phosphate = (2S)-2-hydroxy-3-oxobutyl phosphate + formate + H(+). Its pathway is cofactor biosynthesis; riboflavin biosynthesis; 2-hydroxy-3-oxobutyl phosphate from D-ribulose 5-phosphate: step 1/1. Catalyzes the conversion of D-ribulose 5-phosphate to formate and 3,4-dihydroxy-2-butanone 4-phosphate. The polypeptide is 3,4-dihydroxy-2-butanone 4-phosphate synthase (Bordetella bronchiseptica (strain ATCC BAA-588 / NCTC 13252 / RB50) (Alcaligenes bronchisepticus)).